We begin with the raw amino-acid sequence, 93 residues long: Large ribosomal subunit protein bL27 (93 aa).

Residues 1 to 8 (MIMDLQFF) constitute a propeptide that is removed on maturation. Residues 8 to 29 (FSHHKGGGSTANGRNSAGRRLG) form a disordered region.

This sequence belongs to the bacterial ribosomal protein bL27 family. Post-translationally, the N-terminus is cleaved by ribosomal processing cysteine protease Prp.

The sequence is that of Large ribosomal subunit protein bL27 from Limosilactobacillus fermentum (strain NBRC 3956 / LMG 18251) (Lactobacillus fermentum).